The primary structure comprises 816 residues: MLSWRHLVFWAMLVMATLSAARPAPTLPEQVSPKAKVEVESYSAHHGDLLQLRCRLRDDVHSINWEKDGVQLAETNRTRITGAEVEVRDAVQEDSGLYACMTHRPSGTETTFFAVNVSDRIPSVEDDDDDDEKSSSEEKEAENSKPNPVAPFWAHPEKMEKKLHAVPAAKTVKFRCPAGGTPSPTLRWLKNGKEFKPDHRIGGYKVRYQTWSIIMDSVVPSDKGPYTCLVENNYGSINHTYQLDVVERSPHRPILQAGLPANQTVPVGSNVDFVCKVYSDPQPHIQWLKHVTVNGSKYGSDGLPLVQVLKAAGVNTTDKEMEVLHLRNVSFEDAWEYTCLAGNSIGISHHSAWLTVVEAISENPVIMTSPLYLEIIIYCTGAFLISCMLVTVIIYKMKNTTKKTDFNSQPAVHKLAKSFPLQRQVSADSSSSMSSGVMLVRPSRLSSSGSPMLTGVSEYELPEDPRWEFSRDRLILGKPLGEGCFGQVVMGEAIGLDKEKPNRVTKVAVKMLKSDATEKDLSDLISEMEMMKMIGKHKNIINLLGACTQDGPLYVIVEYASKGNLREYLRARRPPGMEYCYNPIHVSKDMLSFKDLVSCAYQVARGMEYLASKKCIHRDLAARNVLVTEDSVMKIADFGLARDIHHIDYYKKTTNGRLPVKWMAPEALFDRIYTHQSDVWSFGVLLWEIFTLGGSPYPGVPVEELFKLLKEGHRMDKPGNCTNELYMMMRDCWHAVPSQRPTFKQLVEDLDRIVAMTSNQEYLDLSMPVDQYSPGFPDTRSSTCSSGEDSVFSHDPLPDEPCLPKYQHANGGLKKR.

The signal sequence occupies residues 1–23 (MLSWRHLVFWAMLVMATLSAARP). The Extracellular portion of the chain corresponds to 24–374 (APTLPEQVSP…VIMTSPLYLE (351 aa)). In terms of domain architecture, Ig-like C2-type 1 spans 25–118 (PTLPEQVSPK…ETTFFAVNVS (94 aa)). C54 and C100 are oxidised to a cystine. N76 and N116 each carry an N-linked (GlcNAc...) asparagine glycan. The disordered stretch occupies residues 118 to 152 (SDRIPSVEDDDDDDEKSSSEEKEAENSKPNPVAPF). Over residues 133 to 143 (KSSSEEKEAEN) the composition is skewed to basic and acidic residues. 2 consecutive Ig-like C2-type domains span residues 156–244 (PEKM…YQLD) and 253–355 (PILQ…AWLT). The cysteines at positions 176 and 228 are disulfide-linked. Residues N238, N262, N294, N315, and N328 are each glycosylated (N-linked (GlcNAc...) asparagine). A disulfide bridge connects residues C275 and C339. Residues 375-395 (IIIYCTGAFLISCMLVTVIIY) form a helical membrane-spanning segment. The Cytoplasmic portion of the chain corresponds to 396–816 (KMKNTTKKTD…QHANGGLKKR (421 aa)). Y459 carries the phosphotyrosine; by autocatalysis modification. The region spanning 474 to 763 (LILGKPLGEG…VAMTSNQEYL (290 aa)) is the Protein kinase domain. ATP-binding positions include 480–486 (LGEGCFG), K510, 558–560 (EYA), and N564. Y579 and Y581 each carry phosphotyrosine; by autocatalysis. Catalysis depends on D619, which acts as the Proton acceptor. ATP is bound by residues R623 and D637. Phosphotyrosine; by autocatalysis occurs at positions 649, 650, 726, and 762. A disordered region spans residues 776–816 (FPDTRSSTCSSGEDSVFSHDPLPDEPCLPKYQHANGGLKKR). The span at 779–788 (TRSSTCSSGE) shows a compositional bias: polar residues.

Belongs to the protein kinase superfamily. Tyr protein kinase family. Fibroblast growth factor receptor subfamily. Monomer. Homodimer after ligand binding. Autophosphorylated. Binding of FGF family members together with heparan sulfate proteoglycan or heparin promotes receptor dimerization and autophosphorylation on tyrosine residues. Autophosphorylation occurs in trans between the two FGFR molecules present in the dimer and proceeds in a highly ordered manner. Phosphotyrosine residues provide docking sites for interacting proteins and so are crucial for FGFR1 function and its regulation. Post-translationally, ubiquitinated. FGFR1 is rapidly ubiquitinated after autophosphorylation, leading to internalization and degradation. In terms of processing, N-glycosylated in the endoplasmic reticulum. The N-glycan chains undergo further maturation to an Endo H-resistant form in the Golgi apparatus.

Its subcellular location is the cell membrane. It localises to the nucleus. The protein localises to the cytoplasm. It is found in the cytosol. The protein resides in the cytoplasmic vesicle. It catalyses the reaction L-tyrosyl-[protein] + ATP = O-phospho-L-tyrosyl-[protein] + ADP + H(+). With respect to regulation, present in an inactive conformation in the absence of bound ligand. Ligand binding leads to dimerization and activation by sequential autophosphorylation on tyrosine residues. In terms of biological role, tyrosine-protein kinase that acts as a cell-surface receptor for fibroblast growth factors and plays an essential role in the regulation of embryonic development, cell proliferation, differentiation and migration. Required for normal mesoderm patterning and normal skeletogenesis. Phosphorylates PLCG1, FRS2, GAB1 and SHB. Ligand binding leads to the activation of several signaling cascades. Activation of PLCG1 leads to the production of the cellular signaling molecules diacylglycerol and inositol-1,4,5-trisphosphate. Phosphorylation of FRS2 triggers recruitment of GRB2, GAB1, PIK3R1 and SOS1, and mediates activation of RAS, MAPK1/ERK2, MAPK3/ERK1 and the MAP kinase signaling pathway, as well as of the AKT1 signaling pathway. Promotes phosphorylation of SHC1, STAT1 and PTPN11/SHP2. In the nucleus, enhances RPS6KA1 and CREB1 activity and contributes to the regulation of transcription. FGFR1 signaling is down-regulated by ubiquitination, internalization and degradation. In Pleurodeles waltl (Iberian ribbed newt), this protein is Fibroblast growth factor receptor 1 (FGFR1).